Reading from the N-terminus, the 487-residue chain is Cobyric acid synthase (487 aa).

The 189-residue stretch at 251–439 folds into the GATase cobBQ-type domain; the sequence is KLKVVAPAYP…CHGVLDHPEA (189 aa). The active-site Nucleophile is the C332. The active site involves H431.

It belongs to the CobB/CobQ family. CobQ subfamily.

It participates in cofactor biosynthesis; adenosylcobalamin biosynthesis. In terms of biological role, catalyzes amidations at positions B, D, E, and G on adenosylcobyrinic A,C-diamide. NH(2) groups are provided by glutamine, and one molecule of ATP is hydrogenolyzed for each amidation. The sequence is that of Cobyric acid synthase from Dechloromonas aromatica (strain RCB).